Here is a 464-residue protein sequence, read N- to C-terminus: Asparagine--tRNA ligase (464 aa).

This sequence belongs to the class-II aminoacyl-tRNA synthetase family. Homodimer.

Its subcellular location is the cytoplasm. The catalysed reaction is tRNA(Asn) + L-asparagine + ATP = L-asparaginyl-tRNA(Asn) + AMP + diphosphate + H(+). In Clostridium botulinum (strain Alaska E43 / Type E3), this protein is Asparagine--tRNA ligase.